Consider the following 392-residue polypeptide: [Phe13]-bombesin receptor (392 aa).

Residues 1-40 (MPEGFQSLNQTLPSAISSIAHLESLNDSFILGAKQSEDVS) lie on the Extracellular side of the membrane. Asn9 and Asn26 each carry an N-linked (GlcNAc...) asparagine glycan. A helical membrane pass occupies residues 41–62 (PGLEILALISVTYAVIISVGIL). Residues 63–81 (GNTILIKVFFKIKSMQTVP) lie on the Cytoplasmic side of the membrane. A helical transmembrane segment spans residues 82 to 102 (NIFITSLAFGDLLLLLTCVPV). The Extracellular portion of the chain corresponds to 103–120 (DASRYIVDTWMFGRAGCK). Cys119 and Cys202 are oxidised to a cystine. The helical transmembrane segment at 121–142 (IISFIQLTSVGVSVFTLTVLSA) threads the bilayer. Residues 143-162 (DRYRAIVKPLQLQTSDAVLK) are Cytoplasmic-facing. Residues 163–183 (TCGKAVCVWIISMLLAAPEAV) form a helical membrane-spanning segment. Over 184 to 219 (FSDLYEFGSSEKNTTFEACAPYPVSEKILQETHSLI) the chain is Extracellular. A helical membrane pass occupies residues 220-240 (CFLVFYIVPLSIISAYYFLIA). The Cytoplasmic segment spans residues 241-271 (KTLYKSTFNMPAEEHTHARKQIESRKRVAKT). A helical transmembrane segment spans residues 272–292 (VLVLVALFAVCWLPNHMLYLY). Over 293–312 (RSFTYHSAVNSSAFHLSATI) the chain is Extracellular. A helical transmembrane segment spans residues 313–332 (FARVLAFSNSCVNPFALYWL). At 333 to 392 (SRSFRQHFKKQVYCCKTEPPASQQSPTHSSTITGITAVKGNIQMSEISITLLSAYDVKKE) the chain is on the cytoplasmic side. Residue Cys346 is the site of S-palmitoyl cysteine attachment.

This sequence belongs to the G-protein coupled receptor 1 family. As to expression, expressed only in brain, primarily in cortex and forebrain and at low levels in the midbrain.

The protein localises to the cell membrane. Functionally, the relative rank potency of bombesin-like peptides for this receptor is [Phe13]bombesin &gt; [Leu13]bombesin &gt; GRP &gt; neuromedin-B. This chain is [Phe13]-bombesin receptor (BB4), found in Bombina orientalis (Oriental fire-bellied toad).